Reading from the N-terminus, the 451-residue chain is Trigger factor (451 aa).

The PPIase FKBP-type domain maps to 173 to 258 (GDRVTLDFVG…LKKIEWAHLP (86 aa)).

It belongs to the FKBP-type PPIase family. Tig subfamily.

It is found in the cytoplasm. The catalysed reaction is [protein]-peptidylproline (omega=180) = [protein]-peptidylproline (omega=0). In terms of biological role, involved in protein export. Acts as a chaperone by maintaining the newly synthesized protein in an open conformation. Functions as a peptidyl-prolyl cis-trans isomerase. This Cupriavidus necator (strain ATCC 17699 / DSM 428 / KCTC 22496 / NCIMB 10442 / H16 / Stanier 337) (Ralstonia eutropha) protein is Trigger factor.